Reading from the N-terminus, the 451-residue chain is AP-4 complex subunit mu (451 aa).

Residues 184 to 450 (REEIFVDIIE…VTQANSYVAR (267 aa)) enclose the MHD domain.

The protein belongs to the adaptor complexes medium subunit family. As to quaternary structure, adaptor protein complex 4 (AP-4) is a heterotetramer composed of two large adaptins (epsilon-type subunit and beta-type subunit), a medium adaptin (mu-type subunit) and a small adaptin (sigma-type subunit).

The protein resides in the golgi apparatus. It localises to the trans-Golgi network. Its subcellular location is the membrane. It is found in the coated pit. Its function is as follows. Subunit of novel type of clathrin- or non-clathrin-associated protein coat involved in targeting proteins from the trans-Golgi network (TGN) to the endosomal-lysosomal system. The chain is AP-4 complex subunit mu (AP4M) from Arabidopsis thaliana (Mouse-ear cress).